Consider the following 201-residue polypeptide: Small ribosomal subunit protein uS4 (201 aa).

Positions 26-47 (LSKKNYPPGQHGNNRRRKTSEY) are disordered. The region spanning 92–154 (ARLDNVVFRL…SKSLEVIADA (63 aa)) is the S4 RNA-binding domain.

Belongs to the universal ribosomal protein uS4 family. In terms of assembly, part of the 30S ribosomal subunit. Contacts protein S5. The interaction surface between S4 and S5 is involved in control of translational fidelity.

One of the primary rRNA binding proteins, it binds directly to 16S rRNA where it nucleates assembly of the body of the 30S subunit. Its function is as follows. With S5 and S12 plays an important role in translational accuracy. The chain is Small ribosomal subunit protein uS4 from Porphyromonas gingivalis (strain ATCC 33277 / DSM 20709 / CIP 103683 / JCM 12257 / NCTC 11834 / 2561).